A 213-amino-acid polypeptide reads, in one-letter code: Receptor-binding cancer antigen expressed on SiSo cells (213 aa).

The Extracellular segment spans residues 1 to 6 (MAITQF). Residues 7 to 27 (RLFKVCTCLATVLSFLKRLIC) form a helical; Signal-anchor for type III membrane protein membrane-spanning segment. The Cytoplasmic segment spans residues 28–213 (RSGRGRKLSG…EQNKMGVKLS (186 aa)). Ser36 carries the phosphoserine modification. Thr41 carries the phosphothreonine modification. Residue Tyr94 is modified to Phosphotyrosine. Residues 168 to 209 (QAEEVLRQQKIADREKRAAEQQRKKMEKEAQRLLKKEQNKMG) adopt a coiled-coil conformation. Basic and acidic residues predominate over residues 179–206 (ADREKRAAEQQRKKMEKEAQRLLKKEQN). The tract at residues 179–213 (ADREKRAAEQQRKKMEKEAQRLLKKEQNKMGVKLS) is disordered.

In terms of assembly, homodimer.

It is found in the golgi apparatus membrane. Its function is as follows. May participate in suppression of cell proliferation and induces apoptotic cell death through activation of interleukin-1-beta converting enzyme (ICE)-like proteases. The polypeptide is Receptor-binding cancer antigen expressed on SiSo cells (Ebag9) (Rattus norvegicus (Rat)).